Consider the following 307-residue polypeptide: MPKISVIGAGNVGATLAQRLIEKDFADVVMLDVVEGIPQGKALDISQSANVLGFSHTITGSNDYAETAGSEIVVITAGIARKPGMTREELLAINQKIMTDVVSNCLKYSPEATLVVVSNPVDTMTYLAWKLSGLPRKRVVGLSGVLDGGRLATFVARELGVKPSAVTPCVMGEHGGSMVVMPRFTLVSGKPLSELVSAEKADELAKRAVNGGAEIVAFLKTGSAFYAPSASIAAMAEAIFTGSGKVMNCAAVLDGEYGLKNIVLGVPVKLGKGGLQEIITLPLDGTENARLLASAEVVKGQIAALSL.

NAD(+) contacts are provided by residues 8 to 13 and Asp-32; that span reads GAGNVG. Residues Arg-81 and Arg-87 each contribute to the substrate site. NAD(+)-binding positions include Asn-94 and 117-119; that span reads VSN. Substrate is bound by residues Asn-119 and Arg-150. His-174 serves as the catalytic Proton acceptor.

Belongs to the LDH/MDH superfamily. MDH type 3 family.

The catalysed reaction is (S)-malate + NAD(+) = oxaloacetate + NADH + H(+). Its function is as follows. Catalyzes the reversible oxidation of malate to oxaloacetate. The protein is Malate dehydrogenase of Dehalococcoides mccartyi (strain ATCC BAA-2266 / KCTC 15142 / 195) (Dehalococcoides ethenogenes (strain 195)).